The chain runs to 567 residues: Arginine--tRNA ligase (567 aa).

Positions 128-138 (ANPTGPLHVGH) match the 'HIGH' region motif.

It belongs to the class-I aminoacyl-tRNA synthetase family. As to quaternary structure, monomer.

The protein localises to the cytoplasm. The enzyme catalyses tRNA(Arg) + L-arginine + ATP = L-arginyl-tRNA(Arg) + AMP + diphosphate. In Acidovorax ebreus (strain TPSY) (Diaphorobacter sp. (strain TPSY)), this protein is Arginine--tRNA ligase.